Consider the following 375-residue polypeptide: POU domain, class 3, transcription factor 1-A (375 aa).

Disordered stretches follow at residues 1–29 (MAAT…RMHQ), 67–138 (PASD…HQPL), and 151–200 (MLGP…PSSD). Polar residues-rich tracts occupy residues 107 to 117 (VHQQSPSSHAW), 129 to 138 (SPSSNSHQPL), and 151 to 160 (MLGPQASSLH). A compositionally biased stretch (basic and acidic residues) spans 162-177 (SMRDPLHDDPGVHDTQ). The POU-specific domain maps to 194–268 (EDAPSSDDLE…LLNKWLEETD (75 aa)). Positions 286-345 (KRKKRTSIEVGVKGALENHFLKCPKPSAHEITSLADSLQLEKEVVRVWFCNRRQKEKRMT) form a DNA-binding region, homeobox.

It belongs to the POU transcription factor family. Class-3 subfamily. In terms of tissue distribution, in embryos at the neural fold stage, localized primarily in the anterior neural plate, and localized mostly in the anterior region of the nerve cord of neurula stage embryos. In tailbud stages, expressed predominantly in the eye and brain, with weak expression along the length of the nerve cord. In adults, expressed in skin and brain.

It is found in the nucleus. In terms of biological role, acts as a transcription factor. May play a role in neuronal differentiation. In Xenopus laevis (African clawed frog), this protein is POU domain, class 3, transcription factor 1-A (pou3f1-a).